The primary structure comprises 61 residues: Metallothionein-2A (61 aa).

Methionine 1 is modified (N-acetylmethionine). Positions 1–29 (MDPNCSCAAGGSCTCAGSCKCKDCKCTSC) are beta. 18 residues coordinate a divalent metal cation: cysteine 5, cysteine 7, cysteine 13, cysteine 15, cysteine 19, cysteine 21, cysteine 24, cysteine 26, cysteine 29, cysteine 33, cysteine 34, cysteine 36, cysteine 37, cysteine 41, cysteine 44, cysteine 48, cysteine 50, and cysteine 57. The tract at residues 30 to 61 (KKSCCSCCPVGCAKCAQGCICKGASDKCSCCA) is alpha. At serine 58 the chain carries Phosphoserine. A divalent metal cation contacts are provided by cysteine 59 and cysteine 60.

It belongs to the metallothionein superfamily. Type 1 family. Interacts with EOLA1.

Functionally, metallothioneins have a high content of cysteine residues that bind various heavy metals; these proteins are transcriptionally regulated by both heavy metals and glucocorticoids. This Sus scrofa (Pig) protein is Metallothionein-2A (MT2A).